The chain runs to 310 residues: tRNA dimethylallyltransferase (310 aa).

24–31 (GPTASGKT) is a binding site for ATP. Residue 26–31 (TASGKT) participates in substrate binding. Positions 49–52 (DSRQ) are interaction with substrate tRNA.

This sequence belongs to the IPP transferase family. As to quaternary structure, monomer. Mg(2+) is required as a cofactor.

The catalysed reaction is adenosine(37) in tRNA + dimethylallyl diphosphate = N(6)-dimethylallyladenosine(37) in tRNA + diphosphate. In terms of biological role, catalyzes the transfer of a dimethylallyl group onto the adenine at position 37 in tRNAs that read codons beginning with uridine, leading to the formation of N6-(dimethylallyl)adenosine (i(6)A). The protein is tRNA dimethylallyltransferase of Synechococcus sp. (strain WH7803).